The sequence spans 130 residues: Small ribosomal subunit protein uS8 (130 aa).

Belongs to the universal ribosomal protein uS8 family. In terms of assembly, part of the 30S ribosomal subunit. Contacts proteins S5 and S12.

In terms of biological role, one of the primary rRNA binding proteins, it binds directly to 16S rRNA central domain where it helps coordinate assembly of the platform of the 30S subunit. The polypeptide is Small ribosomal subunit protein uS8 (Pectobacterium carotovorum subsp. carotovorum (strain PC1)).